The chain runs to 448 residues: Trigger factor (448 aa).

The PPIase FKBP-type domain occupies 172-257 (GDRVTVDFVG…MKKIEWPHLP (86 aa)).

It belongs to the FKBP-type PPIase family. Tig subfamily.

Its subcellular location is the cytoplasm. It carries out the reaction [protein]-peptidylproline (omega=180) = [protein]-peptidylproline (omega=0). Functionally, involved in protein export. Acts as a chaperone by maintaining the newly synthesized protein in an open conformation. Functions as a peptidyl-prolyl cis-trans isomerase. The chain is Trigger factor from Burkholderia cenocepacia (strain HI2424).